Reading from the N-terminus, the 299-residue chain is ATP phosphoribosyltransferase (299 aa).

This sequence belongs to the ATP phosphoribosyltransferase family. Long subfamily. In terms of assembly, equilibrium between an active dimeric form, an inactive hexameric form and higher aggregates. Interconversion between the various forms is largely reversible and is influenced by the natural substrates and inhibitors of the enzyme. The cofactor is Mg(2+).

It is found in the cytoplasm. The enzyme catalyses 1-(5-phospho-beta-D-ribosyl)-ATP + diphosphate = 5-phospho-alpha-D-ribose 1-diphosphate + ATP. Its pathway is amino-acid biosynthesis; L-histidine biosynthesis; L-histidine from 5-phospho-alpha-D-ribose 1-diphosphate: step 1/9. With respect to regulation, feedback inhibited by histidine. In terms of biological role, catalyzes the condensation of ATP and 5-phosphoribose 1-diphosphate to form N'-(5'-phosphoribosyl)-ATP (PR-ATP). Has a crucial role in the pathway because the rate of histidine biosynthesis seems to be controlled primarily by regulation of HisG enzymatic activity. The chain is ATP phosphoribosyltransferase from Serratia proteamaculans (strain 568).